Here is a 196-residue protein sequence, read N- to C-terminus: Beta-crystallin A2 (196 aa).

The N-terminal arm stretch occupies residues 1 to 11; the sequence is MTSEAMDTLGQ. Beta/gamma crystallin 'Greek key' domains lie at 12–51 and 52–98; these read YKITVWEEESFQGKRCEFLMECPSIMERGFRKIRSIKVES and GPWV…RPVK. The segment at 99 to 104 is connecting peptide; that stretch reads CANHND. Beta/gamma crystallin 'Greek key' domains lie at 105–146 and 147–195; these read SKAI…KVNA and GAWV…RRIQ.

This sequence belongs to the beta/gamma-crystallin family. In terms of assembly, homo/heterodimer, or complexes of higher-order. The structure of beta-crystallin oligomers seems to be stabilized through interactions between the N-terminal arms.

Crystallins are the dominant structural components of the vertebrate eye lens. This is Beta-crystallin A2 (CRYBA2) from Gallus gallus (Chicken).